Here is a 365-residue protein sequence, read N- to C-terminus: DNA repair protein rhp51 (365 aa).

Positions 1–25 (MADTEVEMQVSAADTNNNENGQAQS) are disordered. Residues 12–25 (AADTNNNENGQAQS) show a composition bias toward polar residues. 149–156 (GEFRTGKS) contacts ATP.

This sequence belongs to the RecA family. RAD51 subfamily. In terms of assembly, interacts with rad22, rad54, rdh54, rhp54, rti1, swi2 and swi5. Forms homooiligomers.

Its subcellular location is the nucleus. Required both for recombination and for the repair of DNA damage caused by X-rays. Binds to single and double-stranded DNA, in the presence of magnesium, and exhibits DNA-dependent ATPase activity. Promotes DNA strand annealing and strand exchange via DNA recombinase activity and forms helical nucleoprotein filaments. In Schizosaccharomyces pombe (strain 972 / ATCC 24843) (Fission yeast), this protein is DNA repair protein rhp51 (rhp51).